A 141-amino-acid polypeptide reads, in one-letter code: UPF0310 protein Mflv_0785 (141 aa).

The protein belongs to the UPF0310 family.

This chain is UPF0310 protein Mflv_0785, found in Mycolicibacterium gilvum (strain PYR-GCK) (Mycobacterium gilvum (strain PYR-GCK)).